We begin with the raw amino-acid sequence, 60 residues long: Cecropin-B type 2 (60 aa).

A signal peptide spans 1–24; it reads MNFSKLFALVLLIGLVLLTGQTEA. Residue isoleucine 58 is modified to Isoleucine amide.

This sequence belongs to the cecropin family.

Its subcellular location is the secreted. In terms of biological role, cecropins have lytic and antibacterial activity against several Gram-positive and Gram-negative bacteria. This Aedes albopictus (Asian tiger mosquito) protein is Cecropin-B type 2 (CECB2).